The primary structure comprises 538 residues: Poly [ADP-ribose] polymerase 2 (538 aa).

The WGR domain maps to 1–94 (MSIINDENGR…RDDEPVPNKY (94 aa)). The disordered stretch occupies residues 104–133 (RQTEKEVKKEEPEPEPKVDEKNTRGRKKRG). Residues 105–126 (QTEKEVKKEEPEPEPKVDEKNT) are compositionally biased toward basic and acidic residues. In terms of domain architecture, PARP alpha-helical spans 148–285 (VEEVNEKLKE…GSIEASLELK (138 aa)). A PARP catalytic domain is found at 309-535 (EPVSEEIAGK…VKVDRLTAKE (227 aa)). The tract at residues 357 to 381 (QEVPKKRGRKSTKTAAPTVPPPTTK) is disordered.

It belongs to the ARTD/PARP family.

Its subcellular location is the nucleus. It carries out the reaction NAD(+) + (ADP-D-ribosyl)n-acceptor = nicotinamide + (ADP-D-ribosyl)n+1-acceptor + H(+).. The catalysed reaction is L-aspartyl-[protein] + NAD(+) = 4-O-(ADP-D-ribosyl)-L-aspartyl-[protein] + nicotinamide. The enzyme catalyses L-glutamyl-[protein] + NAD(+) = 5-O-(ADP-D-ribosyl)-L-glutamyl-[protein] + nicotinamide. Its activity is regulated as follows. Inhibited by N-(6-oxo-5,6-dihydrophenanthridin-2-yl)-N,N-dimethylacetamide HCl (PJ34), 1,5-dihydroxyisoquinoline (DHQ) and 3-aminobenzamide (3AB). Poly[ADP-ribose] polymerase modifies various nuclear proteins by poly(ADP-ribosyl)ation, a post-translational modification synthesized after DNA damage that appears as an obligatory step in a detection/signaling pathway leading to the reparation of DNA strand breaks and programmed cell death. The chain is Poly [ADP-ribose] polymerase 2 from Caenorhabditis elegans.